Consider the following 64-residue polypeptide: Cytochrome c oxidase subunit 9, mitochondrial (64 aa).

The Mitochondrial matrix segment spans residues 1 to 15 (MAATAVRPITGMLRR). A helical membrane pass occupies residues 16-36 (GLILDIGIALGVGFVMANGYW). The Mitochondrial intermembrane portion of the chain corresponds to 37 to 64 (YGYHMPRTNARDNYYKKLEEERAARMGA).

Belongs to the fungal cytochrome c oxidase subunit 7a family. As to quaternary structure, component of the cytochrome c oxidase (complex IV, CIV), a multisubunit enzyme composed of 11 subunits. The complex is composed of a catalytic core of 3 subunits Cox1, Cox2 and Cox3, encoded in the mitochondrial DNA, and 8 supernumerary subunits Cox4, Cox5a/Cox5, Cox6, Cox7, Cox8, Cox7a/Cox9, Cox6b/Cox12 and Cox6a/Cox13, which are encoded in the nuclear genome. The complex exists as a monomer or a dimer and forms respiratory supercomplexes (SCs) in the inner mitochondrial membrane with NADH-ubiquinone oxidoreductase (complex I, CI) and ubiquinol-cytochrome c oxidoreductase (cytochrome b-c1 complex, complex III, CIII), resulting in various different assemblies (supercomplexes I(1)IV(1), I(1)III(3)IV(2), III(2)IV(1) and III(2)IV(2) as well as larger supercomplexes of compositions like I(1)III(2)IV(5-6)).

It localises to the mitochondrion inner membrane. It functions in the pathway energy metabolism; oxidative phosphorylation. Its function is as follows. Component of the cytochrome c oxidase, the last enzyme in the mitochondrial electron transport chain which drives oxidative phosphorylation. The respiratory chain contains 3 multisubunit complexes succinate dehydrogenase (complex II, CII), ubiquinol-cytochrome c oxidoreductase (cytochrome b-c1 complex, complex III, CIII) and cytochrome c oxidase (complex IV, CIV), that cooperate to transfer electrons derived from NADH and succinate to molecular oxygen, creating an electrochemical gradient over the inner membrane that drives transmembrane transport and the ATP synthase. Cytochrome c oxidase is the component of the respiratory chain that catalyzes the reduction of oxygen to water. Electrons originating from reduced cytochrome c in the intermembrane space (IMS) are transferred via the dinuclear copper A center (CU(A)) of Cox2 and heme A of Cox1 to the active site in Cox1, a binuclear center (BNC) formed by heme A3 and copper B (CU(B)). The BNC reduces molecular oxygen to 2 water molecules using 4 electrons from cytochrome c in the IMS and 4 protons from the mitochondrial matrix. The polypeptide is Cytochrome c oxidase subunit 9, mitochondrial (cox-17) (Neurospora crassa (strain ATCC 24698 / 74-OR23-1A / CBS 708.71 / DSM 1257 / FGSC 987)).